We begin with the raw amino-acid sequence, 382 residues long: Galactokinase (382 aa).

Substrate is bound at residue 34 to 37 (EHTD). Residue 124-130 (GAGLSSS) coordinates ATP. Residues serine 130 and glutamate 162 each coordinate Mg(2+). Aspartate 174 serves as the catalytic Proton acceptor. Position 223 (tyrosine 223) interacts with substrate.

This sequence belongs to the GHMP kinase family. GalK subfamily.

It is found in the cytoplasm. It catalyses the reaction alpha-D-galactose + ATP = alpha-D-galactose 1-phosphate + ADP + H(+). The protein operates within carbohydrate metabolism; galactose metabolism. Its function is as follows. Catalyzes the transfer of the gamma-phosphate of ATP to D-galactose to form alpha-D-galactose-1-phosphate (Gal-1-P). This Salmonella schwarzengrund (strain CVM19633) protein is Galactokinase.